The sequence spans 580 residues: Alpha-glucosidase (580 aa).

A signal peptide spans 1-19 (MRPLGALSLFALLATTVSG). N-linked (GlcNAc...) asparagine glycans are attached at residues N102 and N127. Residue D224 is the Nucleophile of the active site. E290 serves as the catalytic Proton donor. An N-linked (GlcNAc...) asparagine glycan is attached at N501. A helical transmembrane segment spans residues 560-580 (AAAINLSIGLLLAIMARYIFV).

It belongs to the glycosyl hydrolase 13 family. In terms of assembly, (Microbial infection) Binds to L.sphaericus BinB subunit of the binary toxin BinAB. In terms of tissue distribution, in 4th-instar larvae produced in the brush border membranes of the gastric caeca and the posterior stomach cells (at protein level).

It localises to the membrane. It carries out the reaction Hydrolysis of terminal, non-reducing (1-&gt;4)-linked alpha-D-glucose residues with release of alpha-D-glucose.. Its function is as follows. Probably an alpha-glucosidase, it has no alpha-amylase function. In terms of biological role, (Microbial infection) Serves as the larval receptor for Lysinibacillus sphaericus BinB toxin. The polypeptide is Alpha-glucosidase (Culex pipiens (House mosquito)).